A 286-amino-acid chain; its full sequence is 3-hydroxyanthranilate 3,4-dioxygenase (286 aa).

The segment at 1–160 (MERRLGVRAW…SEQYRTGKPI (160 aa)) is domain A (catalytic). R43 is an O2 binding site. 3 residues coordinate Fe cation: H47, E53, and H91. A substrate-binding site is contributed by E53. Residues R95 and E105 each coordinate substrate. The tract at residues 161-177 (PDQLLKEPPFPLSTRSI) is linker. The domain B stretch occupies residues 178–286 (MEPMSLDAWL…QDPACKKPLG (109 aa)).

Belongs to the 3-HAO family. Monomer. Fe(2+) serves as cofactor.

The protein resides in the cytoplasm. Its subcellular location is the cytosol. The enzyme catalyses 3-hydroxyanthranilate + O2 = (2Z,4Z)-2-amino-3-carboxymuconate 6-semialdehyde. Its pathway is cofactor biosynthesis; NAD(+) biosynthesis; quinolinate from L-kynurenine: step 3/3. Functionally, catalyzes the oxidative ring opening of 3-hydroxyanthranilate to 2-amino-3-carboxymuconate semialdehyde, which spontaneously cyclizes to quinolinate. This Homo sapiens (Human) protein is 3-hydroxyanthranilate 3,4-dioxygenase.